We begin with the raw amino-acid sequence, 795 residues long: Phenylalanine--tRNA ligase beta subunit (795 aa).

Positions 39 to 148 (AGSFNGVVVG…ADAPLGTDIR (110 aa)) constitute a tRNA-binding domain. Residues 401-476 (PKRATITLRR…RVYGYNNIPD (76 aa)) enclose the B5 domain. Aspartate 454, aspartate 460, glutamate 463, and glutamate 464 together coordinate Mg(2+). The 94-residue stretch at 701–794 (SRFPANRRDI…LKERFQASLR (94 aa)) folds into the FDX-ACB domain.

Belongs to the phenylalanyl-tRNA synthetase beta subunit family. Type 1 subfamily. In terms of assembly, tetramer of two alpha and two beta subunits. The cofactor is Mg(2+).

Its subcellular location is the cytoplasm. It carries out the reaction tRNA(Phe) + L-phenylalanine + ATP = L-phenylalanyl-tRNA(Phe) + AMP + diphosphate + H(+). The chain is Phenylalanine--tRNA ligase beta subunit from Salmonella paratyphi A (strain ATCC 9150 / SARB42).